The primary structure comprises 411 residues: Translation initiation factor 2 subunit gamma (411 aa).

The tr-type G domain occupies 9–203; sequence QAEVNIGMVG…AIQDFIPTPK (195 aa). Positions 18–25 are G1; that stretch reads GHVDHGKT. Residues D21, T25, G46, and S48 each coordinate Mg(2+). 21–26 provides a ligand contact to GTP; that stretch reads DHGKTS. The interval 46 to 50 is G2; it reads GISIR. Zn(2+) is bound by residues C61, C64, C73, and C76. The interval 90–93 is G3; the sequence is DSPG. GTP is bound by residues 146-149 and 181-183; these read NKID and SAH. Positions 146–149 are G4; it reads NKID. The G5 stretch occupies residues 181–183; the sequence is SAH.

The protein belongs to the TRAFAC class translation factor GTPase superfamily. Classic translation factor GTPase family. EIF2G subfamily. Heterotrimer composed of an alpha, a beta and a gamma chain. Mg(2+) serves as cofactor.

It carries out the reaction GTP + H2O = GDP + phosphate + H(+). Its function is as follows. eIF-2 functions in the early steps of protein synthesis by forming a ternary complex with GTP and initiator tRNA. The protein is Translation initiation factor 2 subunit gamma of Methanocaldococcus jannaschii (strain ATCC 43067 / DSM 2661 / JAL-1 / JCM 10045 / NBRC 100440) (Methanococcus jannaschii).